Here is a 589-residue protein sequence, read N- to C-terminus: ATP-dependent lipid A-core flippase (589 aa).

5 helical membrane passes run 29-49 (LLLVAALIAALIEAAGTTGFL), 70-90 (WLPVQIILLFVVRGVAGYITD), 157-177 (VIGALALMLWHSWQVTLTILV), 261-281 (MIGAIGLSALLFVAGAQALAG), and 283-303 (LTAGDFVVLMTSMLTIIPGLK). Positions 32-314 (VAALIAALIE…LTNVQNMVQR (283 aa)) constitute an ABC transmembrane type-1 domain. In terms of domain architecture, ABC transporter spans 346-582 (IEFRDVTARY…GGLYSHLHGM (237 aa)). 380-387 (GRSGSGKS) lines the ATP pocket.

This sequence belongs to the ABC transporter superfamily. Lipid exporter (TC 3.A.1.106) family. As to quaternary structure, homodimer.

It localises to the cell inner membrane. The enzyme catalyses ATP + H2O + lipid A-core oligosaccharideSide 1 = ADP + phosphate + lipid A-core oligosaccharideSide 2.. In terms of biological role, involved in lipopolysaccharide (LPS) biosynthesis. Translocates lipid A-core from the inner to the outer leaflet of the inner membrane. Transmembrane domains (TMD) form a pore in the inner membrane and the ATP-binding domain (NBD) is responsible for energy generation. The polypeptide is ATP-dependent lipid A-core flippase (Xanthomonas axonopodis pv. citri (strain 306)).